Consider the following 246-residue polypeptide: Neuromodulin (246 aa).

Residues 1-246 are disordered; sequence MLCCMRRTKQ…EESKADQENA (246 aa). 2 S-palmitoyl cysteine lipidation sites follow: Cys3 and Cys4. The span at 9–33 shows a compositional bias: basic and acidic residues; sequence KQVEKNEDGDQKIEQDGIKPEDKAH. Positions 32-61 constitute an IQ domain; the sequence is AHKAATKIQASFRGHITRKKLKGEKKADAP. Low complexity-rich tracts occupy residues 87–99 and 125–157; these read ASAA…ADSA and SEQP…KAST. The span at 164–176 shows a compositional bias: basic and acidic residues; sequence KADEAQDKEEPKQ. Residues 177–203 show a composition bias toward low complexity; that stretch reads ADVPAADTTATTTPAAEDATAKATAQP. Basic and acidic residues-rich tracts occupy residues 213-225 and 237-246; these read TEEK…ETKP and EESKADQENA.

The protein belongs to the neuromodulin family. As to quaternary structure, binds calmodulin with a greater affinity in the absence of Ca(2+) than in its presence. Palmitoylated. Palmitoylation is essential for plasma membrane association. In terms of tissue distribution, expressed in neurons.

Its subcellular location is the cell membrane. It is found in the cell projection. The protein resides in the growth cone membrane. The protein localises to the synapse. It localises to the filopodium membrane. Functionally, this protein is associated with nerve growth. It is a major component of the motile 'growth cones' that form the tips of elongating axons. Plays a role in axonal and dendritic filopodia induction. The sequence is that of Neuromodulin (GAP43) from Gallus gallus (Chicken).